Reading from the N-terminus, the 114-residue chain is Large ribosomal subunit protein uL22 (114 aa).

It belongs to the universal ribosomal protein uL22 family. In terms of assembly, part of the 50S ribosomal subunit.

Functionally, this protein binds specifically to 23S rRNA; its binding is stimulated by other ribosomal proteins, e.g. L4, L17, and L20. It is important during the early stages of 50S assembly. It makes multiple contacts with different domains of the 23S rRNA in the assembled 50S subunit and ribosome. The globular domain of the protein is located near the polypeptide exit tunnel on the outside of the subunit, while an extended beta-hairpin is found that lines the wall of the exit tunnel in the center of the 70S ribosome. This is Large ribosomal subunit protein uL22 from Streptococcus pneumoniae (strain Taiwan19F-14).